Here is a 283-residue protein sequence, read N- to C-terminus: ATP synthase gamma chain (283 aa).

Belongs to the ATPase gamma chain family. F-type ATPases have 2 components, CF(1) - the catalytic core - and CF(0) - the membrane proton channel. CF(1) has five subunits: alpha(3), beta(3), gamma(1), delta(1), epsilon(1). CF(0) has three main subunits: a, b and c.

It localises to the cell membrane. Produces ATP from ADP in the presence of a proton gradient across the membrane. The gamma chain is believed to be important in regulating ATPase activity and the flow of protons through the CF(0) complex. The sequence is that of ATP synthase gamma chain from Clostridium beijerinckii (strain ATCC 51743 / NCIMB 8052) (Clostridium acetobutylicum).